A 465-amino-acid polypeptide reads, in one-letter code: 6-phospho-beta-glucosidase GmuD (465 aa).

The Proton donor role is filled by Glu170. The active-site Nucleophile is the Glu368.

It belongs to the glycosyl hydrolase 1 family.

The enzyme catalyses 6-phospho-beta-D-glucosyl-(1-&gt;4)-D-glucose + H2O = D-glucose 6-phosphate + D-glucose. Phospho-beta-D-glucosidase that seems to be involved in the degradation of glucomannan. Is also capable of hydrolyzing aryl-phospho-beta-D-glucosides, although very weakly, and plays only a minor role, if any, in the degradation of these substrates in vivo. This Bacillus subtilis (strain 168) protein is 6-phospho-beta-glucosidase GmuD (gmuD).